A 235-amino-acid polypeptide reads, in one-letter code: Putative 4'-phosphopantetheinyl transferase HI_0152 (235 aa).

Mg(2+) is bound by residues aspartate 112, glutamate 114, and glutamate 155.

This sequence belongs to the P-Pant transferase superfamily. Gsp/Sfp/HetI/AcpT family. Mg(2+) is required as a cofactor.

Functionally, may transfer the 4'-phosphopantetheine moiety from coenzyme A (CoA) to a serine residue of a carrier protein domain. The chain is Putative 4'-phosphopantetheinyl transferase HI_0152 from Haemophilus influenzae (strain ATCC 51907 / DSM 11121 / KW20 / Rd).